A 442-amino-acid polypeptide reads, in one-letter code: 4-alpha-glucanotransferase (442 aa).

Residues aspartate 13, asparagine 15, aspartate 17, valine 19, and aspartate 21 each contribute to the Ca(2+) site. The Nucleophile role is filled by aspartate 186. Glutamate 216 (proton donor) is an active-site residue.

Belongs to the glycosyl hydrolase 13 family. As to quaternary structure, monomer. Ca(2+) serves as cofactor.

The protein localises to the cytoplasm. It catalyses the reaction Transfers a segment of a (1-&gt;4)-alpha-D-glucan to a new position in an acceptor, which may be glucose or a (1-&gt;4)-alpha-D-glucan.. Its function is as follows. Hydrolyzes the 1,4-alpha-glycoside bonds in oligomeric and polymeric 1,4-alpha-glucans and transfers oligosaccharides (maltotriose being the shortest one) to acceptor maltodextrins. The sequence is that of 4-alpha-glucanotransferase (mgtA) from Thermotoga neapolitana.